The following is a 75-amino-acid chain: MPHIDIKCFPRELDEQQKAALAADITDVIIRHLNSKDSSISIALQQIQPESWQAIWDTEIAPQMETLIKKPGYSM.

Residue Pro2 is the Proton acceptor; via imino nitrogen of the active site.

It belongs to the 4-oxalocrotonate tautomerase family. PptA subfamily. As to quaternary structure, homodimer.

The protein resides in the cytoplasm. The polypeptide is Tautomerase PptA (Escherichia coli (strain SMS-3-5 / SECEC)).